A 482-amino-acid chain; its full sequence is Programmed cell death protein 7 (482 aa).

Disordered regions lie at residues 1-136 (MALP…GDAA) and 151-170 (GNPR…GPSL). Over residues 13 to 48 (GPPPPQPPPSAPFGCPPPPLPSPAFPPPLPQRPGPF) the composition is skewed to pro residues. A compositionally biased stretch (low complexity) spans 49-71 (PGASAPFLQPPLALQPRAPAEAS). 2 stretches are compositionally biased toward pro residues: residues 82–100 (PVPP…PFPG) and 109–130 (PPPP…PPPD). Residues 151-168 (GNPRRPGGLRTPRTPAGP) are compositionally biased toward low complexity. The stretch at 233–408 (EARRRLERVR…LQKREIESKL (176 aa)) forms a coiled coil.

As to quaternary structure, interacts with RBM40. Component of the U11/U12 snRNPs that are part of the U12-type spliceosome. Highly expressed in testis, thymus and lymph nodes. Detected at low levels in embryonic stem cells.

It is found in the nucleus. Its function is as follows. Promotes apoptosis when overexpressed. This chain is Programmed cell death protein 7 (Pdcd7), found in Mus musculus (Mouse).